Reading from the N-terminus, the 341-residue chain is UDP-3-O-acylglucosamine N-acyltransferase (341 aa).

Histidine 239 functions as the Proton acceptor in the catalytic mechanism.

This sequence belongs to the transferase hexapeptide repeat family. LpxD subfamily. As to quaternary structure, homotrimer.

The catalysed reaction is a UDP-3-O-[(3R)-3-hydroxyacyl]-alpha-D-glucosamine + a (3R)-hydroxyacyl-[ACP] = a UDP-2-N,3-O-bis[(3R)-3-hydroxyacyl]-alpha-D-glucosamine + holo-[ACP] + H(+). Its pathway is bacterial outer membrane biogenesis; LPS lipid A biosynthesis. Catalyzes the N-acylation of UDP-3-O-acylglucosamine using 3-hydroxyacyl-ACP as the acyl donor. Is involved in the biosynthesis of lipid A, a phosphorylated glycolipid that anchors the lipopolysaccharide to the outer membrane of the cell. This is UDP-3-O-acylglucosamine N-acyltransferase from Shewanella oneidensis (strain ATCC 700550 / JCM 31522 / CIP 106686 / LMG 19005 / NCIMB 14063 / MR-1).